Reading from the N-terminus, the 282-residue chain is RsbT co-antagonist protein RsbRC (282 aa).

2 positions are modified to phosphoserine: serine 165 and serine 174. Positions serine 165–aspartate 276 constitute an STAS domain. The residue at position 186 (threonine 186) is a Phosphothreonine.

Probably present in the stressosome with RsbRA, RsbRB, RsbRD and RsbS. In terms of processing, phosphorylated by RsbT.

In terms of biological role, one of 4 functionally non-identical RsbR paralogs, it functions in the environmental signaling branch of the general stress response. Its function is as follows. Negative regulator of sigma-B activity. Non-phosphorylated RsbS binds to RsbT, preventing its association with RsbU. Requires any one of RsbRA, RsbRB, RsbRC or RsbRD to sequester RsbT. When RsbS and the RsbR paralog(s) are phosphorylated, they release RsbT, which can then bind and activate RsbU. In Bacillus subtilis (strain 168), this protein is RsbT co-antagonist protein RsbRC (rsbRC).